A 326-amino-acid polypeptide reads, in one-letter code: MQSATEFLKPRIVEVDRASPLHAKVIMEPFERGYGHTLGNALRRILLSSMVGYAPTEVAISGVVHEYSTIEGVQEDVVDILLNLKGIAFKMHGKAEAILKVSKSGEGVVTAGDIEVGHDIEVLNPDHVIAHLTKGGKLDMEIKIEAGRGYQPATARKVSEETRAVGSILVDASFSPVRRVAYAVESARVEQRTDLDRLVIDIETNGVVEPEEAVRTAARILVSQLSVFADLEGTPAESESPRSPQVDPLLLRPVDDLELTVRSANCLKAENIYFIGDLIQRSETELLRTPNLGRKSLNEIKDVLASKGLSLGMKLENWPPAGLERP.

Positions 1 to 232 (MQSATEFLKP…SQLSVFADLE (232 aa)) are alpha N-terminal domain (alpha-NTD). The alpha C-terminal domain (alpha-CTD) stretch occupies residues 246-326 (VDPLLLRPVD…NWPPAGLERP (81 aa)).

This sequence belongs to the RNA polymerase alpha chain family. As to quaternary structure, homodimer. The RNAP catalytic core consists of 2 alpha, 1 beta, 1 beta' and 1 omega subunit. When a sigma factor is associated with the core the holoenzyme is formed, which can initiate transcription.

It carries out the reaction RNA(n) + a ribonucleoside 5'-triphosphate = RNA(n+1) + diphosphate. Functionally, DNA-dependent RNA polymerase catalyzes the transcription of DNA into RNA using the four ribonucleoside triphosphates as substrates. This chain is DNA-directed RNA polymerase subunit alpha, found in Thiobacillus denitrificans (strain ATCC 25259 / T1).